Here is a 452-residue protein sequence, read N- to C-terminus: tRNA modification GTPase MnmE (452 aa).

Residues Arg-21, Glu-82, and Arg-121 each contribute to the (6S)-5-formyl-5,6,7,8-tetrahydrofolate site. The TrmE-type G domain occupies 214–372; it reads GARVVLVGRP…LAKTIATTLL (159 aa). Asn-224 lines the K(+) pocket. Residues 224–229, 243–249, 268–271, and 353–355 each bind GTP; these read NVGKSS, TPIPGTT, DTAG, and SAR. Ser-228 contributes to the Mg(2+) binding site. 3 residues coordinate K(+): Thr-243, Ile-245, and Thr-248. Thr-249 is a binding site for Mg(2+). Lys-452 is a (6S)-5-formyl-5,6,7,8-tetrahydrofolate binding site.

The protein belongs to the TRAFAC class TrmE-Era-EngA-EngB-Septin-like GTPase superfamily. TrmE GTPase family. In terms of assembly, homodimer. Heterotetramer of two MnmE and two MnmG subunits. K(+) is required as a cofactor.

The protein resides in the cytoplasm. In terms of biological role, exhibits a very high intrinsic GTPase hydrolysis rate. Involved in the addition of a carboxymethylaminomethyl (cmnm) group at the wobble position (U34) of certain tRNAs, forming tRNA-cmnm(5)s(2)U34. The protein is tRNA modification GTPase MnmE of Chloroflexus aurantiacus (strain ATCC 29366 / DSM 635 / J-10-fl).